The sequence spans 447 residues: UDP-N-acetylmuramate--L-alanine ligase (447 aa).

108-114 (GSHGKTS) provides a ligand contact to ATP.

It belongs to the MurCDEF family.

It is found in the cytoplasm. It catalyses the reaction UDP-N-acetyl-alpha-D-muramate + L-alanine + ATP = UDP-N-acetyl-alpha-D-muramoyl-L-alanine + ADP + phosphate + H(+). The protein operates within cell wall biogenesis; peptidoglycan biosynthesis. Its function is as follows. Cell wall formation. In Listeria monocytogenes serovar 1/2a (strain ATCC BAA-679 / EGD-e), this protein is UDP-N-acetylmuramate--L-alanine ligase.